The primary structure comprises 338 residues: Terpene synthase 1 (338 aa).

A DDxx(x)D/E motif motif is present at residues 80–85 (DDALDS). Residues 220–228 (NDLVSYEKE) carry the NDxxSxxxD/E motif motif.

The protein belongs to the terpene synthase family.

It carries out the reaction (2E,6E)-farnesyl diphosphate = (2S,3R,6S,9S)-(-)-protoillud-7-ene + diphosphate. Terpene synthase that converts its substrate farnesyl diphosphate (FPP) into the sesquiterpene protoillud-7-ene. In Cavenderia fasciculata (Slime mold), this protein is Terpene synthase 1.